The sequence spans 181 residues: MQNVTDSFVSLGHWPSAGGFGFNTDILATNPINLSVVLGVVIYFGKGVLNDLLDNRKQRILSTIRNSEELRQAAIEQLEKARARLRKVETEANDYRVNGYSEIEREKQNLIKATSENLERLENYKNETLLFEQQRAINQVRQRVFQQALQGALGTLNSCLNSELHFRTISANIGILGVMEE.

A helical transmembrane segment spans residues 27 to 49; it reads LATNPINLSVVLGVVIYFGKGVL.

The protein belongs to the ATPase B chain family. In terms of assembly, F-type ATPases have 2 components, F(1) - the catalytic core - and F(0) - the membrane proton channel. F(1) has five subunits: alpha(3), beta(3), gamma(1), delta(1), epsilon(1). F(0) has four main subunits: a(1), b(1), b'(1) and c(10-14). The alpha and beta chains form an alternating ring which encloses part of the gamma chain. F(1) is attached to F(0) by a central stalk formed by the gamma and epsilon chains, while a peripheral stalk is formed by the delta, b and b' chains.

It is found in the plastid. Its subcellular location is the chloroplast thylakoid membrane. F(1)F(0) ATP synthase produces ATP from ADP in the presence of a proton or sodium gradient. F-type ATPases consist of two structural domains, F(1) containing the extramembraneous catalytic core and F(0) containing the membrane proton channel, linked together by a central stalk and a peripheral stalk. During catalysis, ATP synthesis in the catalytic domain of F(1) is coupled via a rotary mechanism of the central stalk subunits to proton translocation. Functionally, component of the F(0) channel, it forms part of the peripheral stalk, linking F(1) to F(0). The protein is ATP synthase subunit b, chloroplastic of Lemna minor (Common duckweed).